An 88-amino-acid polypeptide reads, in one-letter code: Enticin (88 aa).

Positions 1–19 (MKTALPLLLLTCLVAAVQS) are cleaved as a signal peptide. 3 cysteine pairs are disulfide-bonded: cysteine 25–cysteine 33, cysteine 40–cysteine 52, and cysteine 59–cysteine 67. Positions 69 to 88 (REQSQLNHDHLNNHTTTQQP) are excised as a propeptide.

Binds to attractin and temptin.

Its subcellular location is the secreted. In terms of biological role, a component of the complex of water-borne protein pheromones that stimulates attraction and mating behavior. The protein is Enticin of Aplysia californica (California sea hare).